We begin with the raw amino-acid sequence, 333 residues long: Putative ketol-acid reductoisomerase 2 (333 aa).

One can recognise a KARI N-terminal Rossmann domain in the interval 1 to 182; it reads MDKTVLDANL…AIPGGIAVIS (182 aa). Residues 183 to 329 form the KARI C-terminal knotted domain; the sequence is SFEEEALLDL…KELYKLLGRK (147 aa).

The protein belongs to the ketol-acid reductoisomerase family.

The catalysed reaction is (2R)-2,3-dihydroxy-3-methylbutanoate + NADP(+) = (2S)-2-acetolactate + NADPH + H(+). It catalyses the reaction (2R,3R)-2,3-dihydroxy-3-methylpentanoate + NADP(+) = (S)-2-ethyl-2-hydroxy-3-oxobutanoate + NADPH + H(+). It participates in amino-acid biosynthesis; L-isoleucine biosynthesis; L-isoleucine from 2-oxobutanoate: step 2/4. The protein operates within amino-acid biosynthesis; L-valine biosynthesis; L-valine from pyruvate: step 2/4. This Saccharolobus solfataricus (strain ATCC 35092 / DSM 1617 / JCM 11322 / P2) (Sulfolobus solfataricus) protein is Putative ketol-acid reductoisomerase 2 (ilvC2).